Here is a 354-residue protein sequence, read N- to C-terminus: UDP-N-acetylglucosamine--N-acetylmuramyl-(pentapeptide) pyrophosphoryl-undecaprenol N-acetylglucosamine transferase (354 aa).

UDP-N-acetyl-alpha-D-glucosamine-binding positions include 14–16 (TGG), asparagine 126, arginine 162, serine 190, isoleucine 243, 262–267 (ALTVSE), and glutamine 287.

It belongs to the glycosyltransferase 28 family. MurG subfamily.

The protein resides in the cell inner membrane. It carries out the reaction di-trans,octa-cis-undecaprenyl diphospho-N-acetyl-alpha-D-muramoyl-L-alanyl-D-glutamyl-meso-2,6-diaminopimeloyl-D-alanyl-D-alanine + UDP-N-acetyl-alpha-D-glucosamine = di-trans,octa-cis-undecaprenyl diphospho-[N-acetyl-alpha-D-glucosaminyl-(1-&gt;4)]-N-acetyl-alpha-D-muramoyl-L-alanyl-D-glutamyl-meso-2,6-diaminopimeloyl-D-alanyl-D-alanine + UDP + H(+). It functions in the pathway cell wall biogenesis; peptidoglycan biosynthesis. Cell wall formation. Catalyzes the transfer of a GlcNAc subunit on undecaprenyl-pyrophosphoryl-MurNAc-pentapeptide (lipid intermediate I) to form undecaprenyl-pyrophosphoryl-MurNAc-(pentapeptide)GlcNAc (lipid intermediate II). The sequence is that of UDP-N-acetylglucosamine--N-acetylmuramyl-(pentapeptide) pyrophosphoryl-undecaprenol N-acetylglucosamine transferase from Photobacterium profundum (strain SS9).